Reading from the N-terminus, the 513-residue chain is Teichoic acid ribitol-phosphate polymerase TarK (513 aa).

It belongs to the CDP-glycerol glycerophosphotransferase family.

Its subcellular location is the cell membrane. The catalysed reaction is 4-O-[di(2R)-glycerylphospho]-N-acetyl-beta-D-mannosaminyl-(1-&gt;4)-N-acetyl-alpha-D-glucosaminyl di-trans,octa-cis-undecaprenyl diphosphate + n CDP-L-ribitol = 4-O-[(D-ribitylphospho)(n)-di{(2R)-glycerylphospho}]-N-acetyl-beta-D-mannosaminyl-(1-&gt;4)-N-acetyl-alpha-D-glucosaminyl di-trans,octa-cis-undecaprenyl diphosphate + n CMP + n H(+). The protein operates within cell wall biogenesis; poly(ribitol phosphate) teichoic acid biosynthesis. Can catalyze the polymerization of the main chain of the major teichoic acid by sequential transfer of ribitol phosphate units from CDP-ribitol to the second glycerol phosphate attached to the disaccharide linkage unit. This Staphylococcus aureus (strain NCTC 8325 / PS 47) protein is Teichoic acid ribitol-phosphate polymerase TarK (tarK).